Consider the following 878-residue polypeptide: Interleukin-3 receptor class 2 subunit beta (878 aa).

The N-terminal stretch at 1-22 (MDQQMALTWGLCYMALVALCWG) is a signal peptide. Over 23 to 440 (HEVTEEEETV…SNEYTWTTDW (418 aa)) the chain is Extracellular. Cysteines 39 and 49 form a disulfide. Asn-62 is a glycosylation site (N-linked (GlcNAc...) asparagine). A disulfide bridge links Cys-78 with Cys-95. In terms of domain architecture, Fibronectin type-III 1 spans 139–244 (PPKDIHISPS…PEVHWDSQPG (106 aa)). The disordered stretch occupies residues 223 to 244 (GSSLSGRPSRWSPEVHWDSQPG). Intrachain disulfides connect Cys-254/Cys-264 and Cys-293/Cys-310. The Fibronectin type-III 2 domain occupies 343-438 (QMEPPILNQT…EWSNEYTWTT (96 aa)). N-linked (GlcNAc...) asparagine glycosylation is present at Asn-350. The WSXWS motif signature appears at 427–431 (WSEWS). A helical membrane pass occupies residues 441-462 (VMPTLWIVLILVFLIFTLLLAL). At 463–878 (HFGRVYGYRT…AIQFFKSLKY (416 aa)) the chain is on the cytoplasmic side. Positions 476-484 (WKEKIPNPS) match the Box 1 motif motif. Disordered stretches follow at residues 539–620 (LTIE…GGSL) and 660–709 (SSLE…MASD). Over residues 554–570 (PDTTPAASSESTEQLPN) the composition is skewed to polar residues. Positions 671-689 (EPKENPPVELSVEKQEARD) are enriched in basic and acidic residues. Ser-752 and Ser-754 each carry phosphoserine. The residue at position 765 (Tyr-765) is a Phosphotyrosine. 2 disordered regions span residues 771 to 810 (SVSQAATSPPGHPAPPVASSPTVIPGEPREEVGPASPHPE) and 829 to 849 (PGSLSPHSKPPSPSLCSETED).

This sequence belongs to the type I cytokine receptor family. Type 4 subfamily. In terms of assembly, heterodimer of an alpha and a beta subunit.

It is found in the membrane. In mouse, there are two classes of high-affinity IL3 receptors. One contains this IL3-specific beta subunit and the other contains the beta subunit also shared by high-affinity IL5 and GM-CSF receptors. The sequence is that of Interleukin-3 receptor class 2 subunit beta (Csf2rb2) from Mus musculus (Mouse).